We begin with the raw amino-acid sequence, 290 residues long: 33 kDa chaperonin (290 aa).

2 disulfide bridges follow: C235-C237 and C268-C271.

The protein belongs to the HSP33 family. Post-translationally, under oxidizing conditions two disulfide bonds are formed involving the reactive cysteines. Under reducing conditions zinc is bound to the reactive cysteines and the protein is inactive.

It localises to the cytoplasm. Its function is as follows. Redox regulated molecular chaperone. Protects both thermally unfolding and oxidatively damaged proteins from irreversible aggregation. Plays an important role in the bacterial defense system toward oxidative stress. This is 33 kDa chaperonin from Streptococcus mutans serotype c (strain ATCC 700610 / UA159).